Here is a 298-residue protein sequence, read N- to C-terminus: Elongation factor Ts (298 aa).

Residues 80–83 (TDFV) are involved in Mg(2+) ion dislocation from EF-Tu.

It belongs to the EF-Ts family.

It is found in the cytoplasm. Its function is as follows. Associates with the EF-Tu.GDP complex and induces the exchange of GDP to GTP. It remains bound to the aminoacyl-tRNA.EF-Tu.GTP complex up to the GTP hydrolysis stage on the ribosome. This is Elongation factor Ts from Acidovorax sp. (strain JS42).